Here is a 136-residue protein sequence, read N- to C-terminus: uncharacterized protein (136 aa).

Residues 19–39 (LGFPLGTALLLIIIFSLSGIF) traverse the membrane as a helical segment. Disordered regions lie at residues 54–87 (SLAN…LSVP) and 112–136 (KLTV…VPLY).

Its subcellular location is the membrane. This is an uncharacterized protein from Arabidopsis thaliana (Mouse-ear cress).